The chain runs to 387 residues: 8-amino-7-oxononanoate synthase (387 aa).

Arg19 contacts substrate. Residue 106 to 107 coordinates pyridoxal 5'-phosphate; the sequence is GY. Position 131 (His131) interacts with substrate. Pyridoxal 5'-phosphate is bound by residues Ser177, His205, and Thr236. N6-(pyridoxal phosphate)lysine is present on Lys239. Thr353 is a binding site for substrate.

It belongs to the class-II pyridoxal-phosphate-dependent aminotransferase family. BioF subfamily. Homodimer. Pyridoxal 5'-phosphate is required as a cofactor.

It catalyses the reaction 6-carboxyhexanoyl-[ACP] + L-alanine + H(+) = (8S)-8-amino-7-oxononanoate + holo-[ACP] + CO2. Its pathway is cofactor biosynthesis; biotin biosynthesis. Its function is as follows. Catalyzes the decarboxylative condensation of pimeloyl-[acyl-carrier protein] and L-alanine to produce 8-amino-7-oxononanoate (AON), [acyl-carrier protein], and carbon dioxide. This is 8-amino-7-oxononanoate synthase from Nitrosomonas eutropha (strain DSM 101675 / C91 / Nm57).